A 364-amino-acid chain; its full sequence is 2-oxoadipate dioxygenase/decarboxylase, chloroplastic/amyloplastic (364 aa).

The N-terminal 49 residues, 1–49 (MAVALAGARSPGAGAILSLRRLAPAAAAPVRLGGSGTPGTRRRRGIAMA), are a transit peptide targeting the chloroplast. The 2-oxoadipate site is built by His-107 and Arg-111. A Fe(2+)-binding site is contributed by His-107. A Fe(2+)-binding site is contributed by His-243. 2-oxoadipate-binding residues include Gln-289 and Tyr-313. Glu-315 serves as a coordination point for Fe(2+).

Belongs to the 2-oxoadipate dioxygenase/decarboxylase family. The cofactor is Fe(2+). Expressed in roots, stems, leaf sheaths, leaf blades, panicles, and endosperm.

The protein localises to the plastid. It is found in the chloroplast. It localises to the amyloplast. It carries out the reaction 2-oxoadipate + O2 = (R)-2-hydroxyglutarate + CO2. It functions in the pathway amino-acid degradation. Catalyzes the decarboxylation and hydroxylation of 2-oxoadipate (2OA) to form D-2-hydroxyglutarate (D-2-HGA). Is involved in a D-lysine catabolic pathway. Involved in the regulation of starch synthesis and amyloplast development within the peripheral endosperm during the grain-filling stage. The chain is 2-oxoadipate dioxygenase/decarboxylase, chloroplastic/amyloplastic from Oryza sativa subsp. japonica (Rice).